The chain runs to 270 residues: D-aminoacyl-tRNA deacylase (270 aa).

The protein belongs to the DtdA deacylase family. As to quaternary structure, monomer. Zn(2+) serves as cofactor.

The enzyme catalyses a D-aminoacyl-tRNA + H2O = a tRNA + a D-alpha-amino acid + H(+). It catalyses the reaction glycyl-tRNA(Ala) + H2O = tRNA(Ala) + glycine + H(+). In terms of biological role, D-aminoacyl-tRNA deacylase with broad substrate specificity. By recycling D-aminoacyl-tRNA to D-amino acids and free tRNA molecules, this enzyme counteracts the toxicity associated with the formation of D-aminoacyl-tRNA entities in vivo. This is D-aminoacyl-tRNA deacylase from Pyrococcus furiosus (strain ATCC 43587 / DSM 3638 / JCM 8422 / Vc1).